The primary structure comprises 261 residues: MSLRPLPLLVVPGLLQLLFCDSEEVIHNTESVDWEDRTVPETLVGNLFHSRITSPLRLFVKQPPDPKPSYADNTKNFWDWLANITEIQEQLARTKRRPIVKTGKFKKMFGWGDFHSNIKTVKLNLLITGKIVDHGNGTFSVYFRHNSTGLGNVSVSLVPPSKVVEFEISPQSTLETKESKSFNCHIEYEKTDRAKKTALCNFDPSKICYQEQTQSHVSWLCSKPFKVICIHIIFYSVDYKLVQKVCPDYNYHSETPYLSFG.

Residues 1 to 22 (MSLRPLPLLVVPGLLQLLFCDS) form the signal peptide. Residues 23-87 (EEVIHNTESV…WDWLANITEI (65 aa)) form an II region. N-linked (GlcNAc...) asparagine glycosylation is found at asparagine 83, asparagine 136, asparagine 146, and asparagine 152. The III stretch occupies residues 88–166 (QEQLARTKRR…LVPPSKVVEF (79 aa)). Positions 167-175 (EISPQSTLE) are IV (linker domain). Residues 176–261 (TKESKSFNCH…HSETPYLSFG (86 aa)) are v (Cys-rich).

It belongs to the neurexophilin family. May be proteolytically processed at the boundary between the N-terminal non-conserved and the central conserved domain in neuron-like cells.

It is found in the secreted. May be signaling molecules that resemble neuropeptides and that act by binding to alpha-neurexins and possibly other receptors. The chain is Neurexophilin-2 (Nxph2) from Mus musculus (Mouse).